A 189-amino-acid chain; its full sequence is MTDKTEKVAVDPETVFKRPRECDSPSYQKRQRMALLARKQGAGDSLIAGSAMSKEKKLMTGHAIPPSQLDSQIDDFTGFSKDRMMQKPGSNAPVGGNVTSSFSGDDLECRETASSPKSQREINADIKRKLVKELRCVGQKYEKIFEMLEGVQGPTAVRKRFFESIIKEAARCMRRDFVKHLKKKLKRMI.

Residues 81 to 119 (KDRMMQKPGSNAPVGGNVTSSFSGDDLECRETASSPKSQ) form a disordered region.

Belongs to the CT45 family. Testis specific. Expressed in cancer cell lines.

Its subcellular location is the nucleus. In Homo sapiens (Human), this protein is Cancer/testis antigen family 45 member A3.